A 329-amino-acid polypeptide reads, in one-letter code: Isopentenyl-diphosphate delta-isomerase (329 aa).

Substrate is bound at residue 4–5; it reads RK. FMN is bound by residues 59–61, Ser-89, and Asn-116; that span reads AMT. Gln-146 contributes to the substrate binding site. Residue Glu-147 coordinates Mg(2+). Residues Lys-178, Ser-203, Thr-208, 252-254, and 273-274 contribute to the FMN site; these read GVR and SR.

It belongs to the IPP isomerase type 2 family. In terms of assembly, homooctamer. Dimer of tetramers. FMN is required as a cofactor. Requires NADPH as cofactor. It depends on Mg(2+) as a cofactor.

The protein resides in the cytoplasm. The catalysed reaction is isopentenyl diphosphate = dimethylallyl diphosphate. Its function is as follows. Involved in the biosynthesis of isoprenoids. Catalyzes the 1,3-allylic rearrangement of the homoallylic substrate isopentenyl (IPP) to its allylic isomer, dimethylallyl diphosphate (DMAPP). The polypeptide is Isopentenyl-diphosphate delta-isomerase (Streptococcus pyogenes serotype M28 (strain MGAS6180)).